Reading from the N-terminus, the 71-residue chain is Small ribosomal subunit protein bS21 (71 aa).

Basic residues predominate over residues 48–59 (EKASLAKRHAKR). Positions 48–71 (EKASLAKRHAKRNFRENARNTRLY) are disordered. Over residues 60-71 (NFRENARNTRLY) the composition is skewed to basic and acidic residues.

It belongs to the bacterial ribosomal protein bS21 family.

The sequence is that of Small ribosomal subunit protein bS21 from Glaesserella parasuis serovar 5 (strain SH0165) (Haemophilus parasuis).